The sequence spans 25 residues: Ranatuerin-1 (25 aa).

A disulfide bridge connects residues cysteine 19 and cysteine 25.

The protein belongs to the frog skin active peptide (FSAP) family. Ranatuerin subfamily. As to expression, expressed by the skin glands.

It localises to the secreted. Antibacterial activity against Gram-positive bacterium S.aureus (MIC=50 uM) and Gram-negative bacterium E.coli (MIC=2 uM). Has activity against C.albicans (MIC=70 uM). Shows no detectable hemolytic activity towards human erythrocytes. This is Ranatuerin-1 from Aquarana catesbeiana (American bullfrog).